Consider the following 352-residue polypeptide: Glycerol-1-phosphate dehydrogenase [NAD(P)+] (352 aa).

Residues 91 to 95 and 113 to 116 each bind NAD(+); these read GRVID and TVAS. Position 118 (Asp-118) interacts with substrate. Ser-122 contributes to the NAD(+) binding site. Position 169 (Glu-169) interacts with substrate. Zn(2+) is bound by residues Glu-169 and His-249. Position 253 (His-253) interacts with substrate. His-269 contacts Zn(2+).

This sequence belongs to the glycerol-1-phosphate dehydrogenase family. Homodimer. Zn(2+) is required as a cofactor.

It localises to the cytoplasm. The enzyme catalyses sn-glycerol 1-phosphate + NAD(+) = dihydroxyacetone phosphate + NADH + H(+). It catalyses the reaction sn-glycerol 1-phosphate + NADP(+) = dihydroxyacetone phosphate + NADPH + H(+). It functions in the pathway membrane lipid metabolism; glycerophospholipid metabolism. In terms of biological role, catalyzes the NAD(P)H-dependent reduction of dihydroxyacetonephosphate (DHAP or glycerone phosphate) to glycerol 1-phosphate (G1P). The G1P thus generated is used as the glycerophosphate backbone of phospholipids in the cellular membranes of Archaea. The chain is Glycerol-1-phosphate dehydrogenase [NAD(P)+] from Caldivirga maquilingensis (strain ATCC 700844 / DSM 13496 / JCM 10307 / IC-167).